Reading from the N-terminus, the 313-residue chain is D-apiose import binding protein (313 aa).

An N-terminal signal peptide occupies residues 1 to 26; sequence MKLTRRLTLAAFASALALGTAMPAFA. Residues Asn-39, 115 to 116, 162 to 164, Arg-168, Asn-218, Asp-243, and Gln-263 contribute to the D-apiofuranose site; these read DR and DTN.

This sequence belongs to the bacterial solute-binding protein 2 family.

The protein localises to the periplasm. In terms of biological role, part of an ABC transporter complex involved in D-apiose import. Binds D-apiose, D-ribose and D-ribulose. The protein is D-apiose import binding protein of Rhizobium etli (strain ATCC 51251 / DSM 11541 / JCM 21823 / NBRC 15573 / CFN 42).